The primary structure comprises 142 residues: Crustacean hyperglycemic hormones (142 aa).

Residues 1 to 26 (MYSKTIPAMLAIITVAYLCALPHAHA) form the signal peptide. Gln-67 carries the post-translational modification Pyrrolidone carboxylic acid; partial. Cystine bridges form between Cys-73–Cys-109, Cys-89–Cys-105, and Cys-92–Cys-118. Val-138 bears the Valine amide mark.

It belongs to the arthropod CHH/MIH/GIH/VIH hormone family. In terms of processing, the N-terminus is blocked only in isoform CHH-II but not in isoform CHH-I. Produced by the medulla terminalis X-organ in the eyestalks and transported to the sinus gland where they are stored and released.

The protein localises to the secreted. In terms of biological role, hormone found in the sinus gland of isopods and decapods which controls the blood sugar level. Has a secretagogue action over the amylase released from the midgut gland. May act as a stress hormone and may be involved in the control of molting and reproduction. This is Crustacean hyperglycemic hormones from Carcinus maenas (Common shore crab).